The primary structure comprises 484 residues: tRNA sulfurtransferase (484 aa).

Residues 61–166 form the THUMP domain; that stretch reads PHLIELLQCI…DKLLFIQARH (106 aa). ATP contacts are provided by residues 183–184, Lys265, Gly287, and Gln296; that span reads LI. Cys344 and Cys456 are joined by a disulfide. Residues 404–483 enclose the Rhodanese domain; sequence LGENDVILDI…FNNVQVFVKA (80 aa). Residue Cys456 is the Cysteine persulfide intermediate of the active site.

The protein belongs to the ThiI family.

It is found in the cytoplasm. The catalysed reaction is [ThiI sulfur-carrier protein]-S-sulfanyl-L-cysteine + a uridine in tRNA + 2 reduced [2Fe-2S]-[ferredoxin] + ATP + H(+) = [ThiI sulfur-carrier protein]-L-cysteine + a 4-thiouridine in tRNA + 2 oxidized [2Fe-2S]-[ferredoxin] + AMP + diphosphate. It catalyses the reaction [ThiS sulfur-carrier protein]-C-terminal Gly-Gly-AMP + S-sulfanyl-L-cysteinyl-[cysteine desulfurase] + AH2 = [ThiS sulfur-carrier protein]-C-terminal-Gly-aminoethanethioate + L-cysteinyl-[cysteine desulfurase] + A + AMP + 2 H(+). Its pathway is cofactor biosynthesis; thiamine diphosphate biosynthesis. Functionally, catalyzes the ATP-dependent transfer of a sulfur to tRNA to produce 4-thiouridine in position 8 of tRNAs, which functions as a near-UV photosensor. Also catalyzes the transfer of sulfur to the sulfur carrier protein ThiS, forming ThiS-thiocarboxylate. This is a step in the synthesis of thiazole, in the thiamine biosynthesis pathway. The sulfur is donated as persulfide by IscS. The chain is tRNA sulfurtransferase from Actinobacillus succinogenes (strain ATCC 55618 / DSM 22257 / CCUG 43843 / 130Z).